We begin with the raw amino-acid sequence, 270 residues long: Glucosamine-6-phosphate deaminase (270 aa).

The active-site Proton acceptor; for enolization step is Asp68. Residue Asp145 is the For ring-opening step of the active site. The active-site Proton acceptor; for ring-opening step is the His147. Glu152 (for ring-opening step) is an active-site residue.

The protein belongs to the glucosamine/galactosamine-6-phosphate isomerase family. NagB subfamily.

The catalysed reaction is alpha-D-glucosamine 6-phosphate + H2O = beta-D-fructose 6-phosphate + NH4(+). Its pathway is amino-sugar metabolism; N-acetylneuraminate degradation; D-fructose 6-phosphate from N-acetylneuraminate: step 5/5. Its function is as follows. Catalyzes the reversible isomerization-deamination of glucosamine 6-phosphate (GlcN6P) to form fructose 6-phosphate (Fru6P) and ammonium ion. This is Glucosamine-6-phosphate deaminase from Bifidobacterium longum (strain DJO10A).